A 563-amino-acid polypeptide reads, in one-letter code: Ataxin-10 homolog (563 aa).

Phosphothreonine is present on Thr433. Residues 544 to 563 are disordered; the sequence is VSKEEDPGNENSEIISIDED. Ser559 carries the phosphoserine modification.

This sequence belongs to the ataxin-10 family.

It localises to the cytoplasm. May play a role in the regulation of cytokinesis. The sequence is that of Ataxin-10 homolog (CTR86) from Saccharomyces cerevisiae (strain ATCC 204508 / S288c) (Baker's yeast).